The sequence spans 442 residues: tRNA-2-methylthio-N(6)-dimethylallyladenosine synthase (442 aa).

An MTTase N-terminal domain is found at 2-120 (KKVFIRTFGC…LPKMIVDKET (119 aa)). Positions 11, 49, 83, 157, 161, and 164 each coordinate [4Fe-4S] cluster. In terms of domain architecture, Radical SAM core spans 143-375 (RVEGGAAFVS…NEVIEAETAR (233 aa)). Residues 378–441 (QTMVGTVQRC…TFSLRGKVVE (64 aa)) enclose the TRAM domain.

It belongs to the methylthiotransferase family. MiaB subfamily. In terms of assembly, monomer. The cofactor is [4Fe-4S] cluster.

Its subcellular location is the cytoplasm. It carries out the reaction N(6)-dimethylallyladenosine(37) in tRNA + (sulfur carrier)-SH + AH2 + 2 S-adenosyl-L-methionine = 2-methylsulfanyl-N(6)-dimethylallyladenosine(37) in tRNA + (sulfur carrier)-H + 5'-deoxyadenosine + L-methionine + A + S-adenosyl-L-homocysteine + 2 H(+). Catalyzes the methylthiolation of N6-(dimethylallyl)adenosine (i(6)A), leading to the formation of 2-methylthio-N6-(dimethylallyl)adenosine (ms(2)i(6)A) at position 37 in tRNAs that read codons beginning with uridine. The polypeptide is tRNA-2-methylthio-N(6)-dimethylallyladenosine synthase (Neisseria meningitidis serogroup B (strain ATCC BAA-335 / MC58)).